A 398-amino-acid chain; its full sequence is Secreted aspartic protease 2 (398 aa).

The signal sequence occupies residues 1-18 (MFLKNIFIALAIALLVDA). The propeptide at 19-56 (TPTTTKRSAGFVALDFSVVKTPKAFPVTNGQEGKTSKR) is activation peptide. The Peptidase A1 domain occupies 70–384 (YAADITVGSN…DLDDNEISLA (315 aa)). Aspartate 88 is a catalytic residue. 88–90 (DTG) serves as a coordination point for pepstatin A. A disulfide bond links cysteine 103 and cysteine 115. 141 to 142 (GD) serves as a coordination point for pepstatin A. The Zn(2+) site is built by aspartate 247 and aspartate 270. Residue aspartate 274 is part of the active site. Pepstatin A is bound at residue 274 to 278 (DSGTT). Cysteine 312 and cysteine 350 are joined by a disulfide. N-linked (GlcNAc...) asparagine glycans are attached at residues asparagine 313 and asparagine 321.

The protein belongs to the peptidase A1 family. As to quaternary structure, monomer.

Its subcellular location is the secreted. It catalyses the reaction Preferential cleavage at the carboxyl of hydrophobic amino acids, but fails to cleave 15-Leu-|-Tyr-16, 16-Tyr-|-Leu-17 and 24-Phe-|-Phe-25 of insulin B chain. Activates trypsinogen, and degrades keratin.. In terms of biological role, secreted aspartic peptidases (SAPs) are a group of ten acidic hydrolases considered as key virulence factors. These enzymes supply the fungus with nutrient amino acids as well as are able to degrade the selected host's proteins involved in the immune defense. Induces host inflammatory cytokine production in a proteolytic activity-independent way. Plays a role in tissue damage during superficial infection. Moreover, acts toward human hemoglobin though limited proteolysis to generate a variety of antimicrobial hemocidins, enabling to compete with the other microorganisms of the same physiological niche using the microbicidal peptides generated from the host protein. Its function is as follows. Plays a key role in defense against host by cleaving histatin-5 (Hst 5), a peptide from human saliva that carries out fungicidal activity. The cleavage rate decreases in an order of SAP2 &gt; SAP9 &gt; SAP3 &gt; SAP7 &gt; SAP4 &gt; SAP1 &gt; SAP8. The first cleavage occurs between residues 'Lys-17' and 'His-18' of Hst 5, giving DSHAKRHHGYKRKFHEK and HHSHRGY peptides. Simultaneously, the DSHAKRHHGYKRK peptide is also formed. Further fragmentation by SAP2 results in FHEK and DSHAKRHHGY products. This chain is Secreted aspartic protease 2, found in Candida albicans (strain SC5314 / ATCC MYA-2876) (Yeast).